The chain runs to 247 residues: UPF0259 membrane protein BUsg_265 (247 aa).

A run of 6 helical transmembrane segments spans residues 20–40, 82–102, 114–134, 137–157, 188–208, and 217–237; these read IKII…INVL, IFKI…IITL, IQFS…LNFI, FFIQ…SVLL, IVGT…TVFS, and FIFL…IVYL.

Belongs to the UPF0259 family.

The protein localises to the cell membrane. In Buchnera aphidicola subsp. Schizaphis graminum (strain Sg), this protein is UPF0259 membrane protein BUsg_265.